A 1179-amino-acid chain; its full sequence is ATP-dependent helicase/deoxyribonuclease subunit B (1179 aa).

The protein belongs to the helicase family. AddB/RexB type 2 subfamily. Heterodimer of AddA and RexB. The cofactor is Mg(2+).

Its function is as follows. The heterodimer acts as both an ATP-dependent DNA helicase and an ATP-dependent, dual-direction single-stranded exonuclease. Recognizes the chi site generating a DNA molecule suitable for the initiation of homologous recombination. This subunit has 5' -&gt; 3' nuclease activity but not helicase activity. This Lacticaseibacillus paracasei (strain ATCC 334 / BCRC 17002 / CCUG 31169 / CIP 107868 / KCTC 3260 / NRRL B-441) (Lactobacillus paracasei) protein is ATP-dependent helicase/deoxyribonuclease subunit B.